Reading from the N-terminus, the 3476-residue chain is Abnormal spindle-like microcephaly-associated protein homolog (3476 aa).

The interval 1–34 (MANRRVGRGCWEVSPTERRPPAGLRGPATEEEAS) is disordered. A phosphoserine mark is found at Ser-280, Ser-283, Ser-367, Ser-392, Ser-425, and Ser-605. In terms of domain architecture, Calponin-homology (CH) 1 spans 920 to 1056 (KASKEILLAF…LLWKIAFAFQ (137 aa)). Residues 1057 to 1078 (VDISLNLDQLKEEIAFLKHTKS) adopt a coiled-coil conformation. Ser-1103 bears the Phosphoserine mark. The region spanning 1110–1261 (SENIKLLMDW…YLSFLCARLL (152 aa)) is the Calponin-homology (CH) 2 domain. IQ domains lie at 1347–1378 (QNKA…IILQ), 1393–1422 (YLWA…MLKS), 1582–1613 (LKKT…VIIQ), 1605–1634 (MKKA…KTRS), 1632–1661 (TRSA…SVIK), 1655–1684 (ILTS…TTIK), 1728–1757 (MRES…AVIS), 1751–1782 (QRKA…IVIQ), 1801–1830 (VKKA…AALK), 1824–1853 (QSIA…SIIK), 1874–1903 (TKAA…AALK), 1897–1928 (EHQA…LVIQ), 1947–1978 (LRHA…IIIQ), 1970–2001 (QXKC…LLIQ), 2020–2049 (TKAA…AAVT), 2043–2074 (CNKA…IIIQ), 2093–2124 (LKKT…TFIK), 2116–2147 (MHRA…IVIQ), 2239–2270 (LRHS…TLIQ), 2262–2293 (MHVA…VWIQ), 2311–2342 (VQNA…TFIQ), 2334–2365 (MHRA…VVIQ), 2384–2415 (QRRS…TLIQ), 2407–2438 (MHSS…IFVQ), 2457–2488 (LRKA…VLIQ), 2530–2561 (QWHS…IIIQ), 2624–2653 (QHQA…TVVS), 2665–2696 (RTQA…TLIQ), 2688–2719 (MHRA…VVIQ), 2738–2767 (VQKS…EKMA), 2814–2845 (QSRA…RIQF), 2859–2890 (QKRA…VVLQ), 2909–2938 (IRSS…STIK), 2932–2963 (IKNS…KIQA), 2954–2985 (KVKA…KIIQ), 3029–3060 (RHRA…LIIQ), 3079–3110 (FKKS…RLLH), and 3203–3234 (FTSG…IRLS).

It is found in the cytoplasm. The protein localises to the cytoskeleton. It localises to the spindle. The protein resides in the nucleus. Its function is as follows. Probable role in mitotic spindle regulation and coordination of mitotic processes. May have a preferential role in regulating neurogenesis. The chain is Abnormal spindle-like microcephaly-associated protein homolog (ASPM) from Macaca fascicularis (Crab-eating macaque).